We begin with the raw amino-acid sequence, 144 residues long: Virulence protein STM3117 (144 aa).

The region spanning 23–143 (RIDHLVLTVS…DGNLIEISQY (121 aa)) is the VOC domain.

Functionally, is critically involved in promoting the replication of S.typhimurium cells inside host macrophages, suggesting a role in the establishment of bacterial colonization within macrophages. May be involved in the biosynthesis and modification of the peptidoglycan layer of the cell wall. In Salmonella typhimurium (strain LT2 / SGSC1412 / ATCC 700720), this protein is Virulence protein STM3117.